We begin with the raw amino-acid sequence, 1371 residues long: F-actin-uncapping protein LRRC16A (1371 aa).

Position 1 is an N-acetylmethionine (Met1). Ser122 carries the post-translational modification Phosphoserine. LRR repeat units lie at residues 245–269, 275–298, 304–327, 336–363, 391–418, 423–447, 481–506, 543–566, 570–593, and 654–678; these read SNRLEELVLENAGLRTDFAQKLASA, NSGLHTINLAGNPLEDRGVSSLSI, PKGLKHLNLSKTSLSPKGVNSLSQ, ASTLVHLDLSGNVLRGDDLSHMYNFLAQ, LQYLAVLNLSRTVFSHRKGKEVPPSFKQ, SLALMHINLSGTKLSPEPLKALLLG, IHNITSLDISDNGLESDLSTLIVWLS, ESPLQSLSLADSKLKTEVTIIINA, NTSLTKVDISGNGMGDMGAKMLAK, and LQKIENYLLRNHETRKYLQEQAYRL. Positions 710 to 734 form a coiled coil; that stretch reads GDAIQEDLKSAERLMRDAKNSKTLL. At Thr916 the chain carries Phosphothreonine. Disordered regions lie at residues 957-1000, 1036-1159, and 1172-1371; these read PFPS…QPTQ, KMDS…RRYG, and KAKQ…FIFV. The stretch at 958–981 is one LRR 11 repeat; sequence FPSLRQEKRSSGFISELPSEEGKK. The tract at residues 958–1082 is inhibits capping activity of CAPZA2; sequence FPSLRQEKRS…LIKSRSKSER (125 aa). Ser968 is subject to Phosphoserine. Basic and acidic residues-rich tracts occupy residues 977 to 986 and 1036 to 1061; these read EEGKKLEHFT and KMDSKKWSTRGSESHELNEGGDEKKK. Residues 1055 to 1089 are necessary for localization at the cell membrane; sequence GGDEKKKRDSRKSSGFLNLIKSRSKSERPPTILMT. A phosphoserine mark is found at Ser1067 and Ser1094. Composition is skewed to basic and acidic residues over residues 1106–1130 and 1139–1148; these read CPRKDTKAAEHNGNSERIEEIKTPD and EIGKVERSDS. A compositionally biased stretch (polar residues) spans 1190–1199; the sequence is AVSQDSSSPA. Phosphothreonine is present on Thr1228. Over residues 1231–1243 the composition is skewed to basic and acidic residues; it reads KNTKAEPKAEAGS. The span at 1244–1265 shows a compositional bias: low complexity; that stretch reads RSRSSSSTPTSPKPLLQSPKPS. Residues Ser1280, Ser1288, Ser1291, Ser1315, Ser1324, and Ser1331 each carry the phosphoserine modification. The segment covering 1313-1326 has biased composition (polar residues); sequence QSSPQPSPRTFSQE. Residues 1340-1353 are compositionally biased toward basic and acidic residues; it reads QEQKQRSSSKDGHQ. The residue at position 1360 (Ser1360) is a Phosphoserine.

This sequence belongs to the CARMIL family. As to quaternary structure, homodimer. Interacts (via C-terminus) with heterodimer capping protein (CP); this interaction uncaps barbed ends capped by CP, enhances barbed-end actin polymerization and promotes lamellipodial formation and cell migration. Interacts with heterodimer capping protein (CP). Interacts with MYO1E. Interacts with TRIO. Expressed in lung, placenta, small intestine, liver, thymus, colon, skeletal muscle, heart and brain. Higher expression in kidney.

It localises to the cytoplasm. The protein localises to the cytoskeleton. It is found in the cell membrane. The protein resides in the cell projection. Its subcellular location is the lamellipodium. Cell membrane-cytoskeleton-associated protein that plays a role in the regulation of actin polymerization at the barbed end of actin filaments. Prevents F-actin heterodimeric capping protein (CP) activity at the leading edges of migrating cells, and hence generates uncapped barbed ends and enhances actin polymerization, however, seems unable to nucleate filaments. Plays a role in lamellipodial protrusion formations and cell migration. This chain is F-actin-uncapping protein LRRC16A, found in Homo sapiens (Human).